Reading from the N-terminus, the 276-residue chain is Large ribosomal subunit protein uL2 (276 aa).

2 disordered regions span residues 35–58 (RKLS…GGGH) and 218–276 (RPIT…KNRK). Over residues 255 to 276 (RRPKKASNKMIVRRRPNGKNRK) the composition is skewed to basic residues.

This sequence belongs to the universal ribosomal protein uL2 family. In terms of assembly, part of the 50S ribosomal subunit. Forms a bridge to the 30S subunit in the 70S ribosome.

In terms of biological role, one of the primary rRNA binding proteins. Required for association of the 30S and 50S subunits to form the 70S ribosome, for tRNA binding and peptide bond formation. It has been suggested to have peptidyltransferase activity; this is somewhat controversial. Makes several contacts with the 16S rRNA in the 70S ribosome. This Bifidobacterium adolescentis (strain ATCC 15703 / DSM 20083 / NCTC 11814 / E194a) protein is Large ribosomal subunit protein uL2.